The primary structure comprises 493 residues: Cytoplasmic tRNA 2-thiolation protein 2 (493 aa).

The residue at position 489 (serine 489) is a Phosphoserine.

Belongs to the CTU2/NCS2 family. Interacts with NCS6 and URM1. May act by forming a heterodimer with NCS6.

The protein localises to the cytoplasm. The protein operates within tRNA modification; 5-methoxycarbonylmethyl-2-thiouridine-tRNA biosynthesis. Its function is as follows. Plays a central role in 2-thiolation of mcm(5)S(2)U at tRNA wobble positions of tRNA(Lys), tRNA(Glu) and tRNA(Gln). May act by forming a heterodimer with NCS6 that ligates sulfur from thiocarboxylated URM1 onto the uridine of tRNAs at wobble position. Prior mcm(5) tRNA modification by the elongator complex is required for 2-thiolation. May also be involved in protein urmylation and in invasive and pseudohyphal growth. Inhibits replication of Brome mosaic virus. This is Cytoplasmic tRNA 2-thiolation protein 2 from Saccharomyces cerevisiae (strain ATCC 204508 / S288c) (Baker's yeast).